A 474-amino-acid chain; its full sequence is tRNA-2-methylthio-N(6)-dimethylallyladenosine synthase (474 aa).

The MTTase N-terminal domain occupies 3–120 (KKLLIKTWGC…LPEMIKQSQS (118 aa)). The [4Fe-4S] cluster site is built by Cys12, Cys49, Cys83, Cys157, Cys161, and Cys164. Residues 143–375 (RAEGATAFVS…QQQINAQAMR (233 aa)) form the Radical SAM core domain. The TRAM domain maps to 378-441 (RLMLGTEQRV…ANSLRGEIVR (64 aa)).

Belongs to the methylthiotransferase family. MiaB subfamily. In terms of assembly, monomer. [4Fe-4S] cluster serves as cofactor.

The protein resides in the cytoplasm. It catalyses the reaction N(6)-dimethylallyladenosine(37) in tRNA + (sulfur carrier)-SH + AH2 + 2 S-adenosyl-L-methionine = 2-methylsulfanyl-N(6)-dimethylallyladenosine(37) in tRNA + (sulfur carrier)-H + 5'-deoxyadenosine + L-methionine + A + S-adenosyl-L-homocysteine + 2 H(+). Catalyzes the methylthiolation of N6-(dimethylallyl)adenosine (i(6)A), leading to the formation of 2-methylthio-N6-(dimethylallyl)adenosine (ms(2)i(6)A) at position 37 in tRNAs that read codons beginning with uridine. The protein is tRNA-2-methylthio-N(6)-dimethylallyladenosine synthase of Vibrio vulnificus (strain CMCP6).